Consider the following 348-residue polypeptide: Rhodopsin (348 aa).

Methionine 1 bears the N-acetylmethionine mark. Topologically, residues 1-36 (MNGTEGPNFYVPFSNKTGVVRSPFEEPQYYLAEPWQ) are extracellular. 2 N-linked (GlcNAc...) asparagine glycosylation sites follow: asparagine 2 and asparagine 15. Residues 37 to 61 (FSCLAAYMFMLIVLGFPINFLTLYV) traverse the membrane as a helical segment. Over 62–73 (TIQHKKLRTPLN) the chain is Cytoplasmic. The helical transmembrane segment at 74-96 (YILLNLAIADLFMVFGGFTTTLY) threads the bilayer. Residues 97 to 110 (TSLHGYFVFGPTGC) lie on the Extracellular side of the membrane. Cysteine 110 and cysteine 187 are joined by a disulfide. The helical transmembrane segment at 111 to 133 (DLEGFFATLGGEIALWSLVVLAI) threads the bilayer. Residues 134-136 (ERY) carry the 'Ionic lock' involved in activated form stabilization motif. Residues 134-152 (ERYIVVCKPMSNFRFGENH) are Cytoplasmic-facing. Residues 153–173 (AIMGVAFTWVMALACAAPPLV) form a helical membrane-spanning segment. The Extracellular portion of the chain corresponds to 174–202 (GWSRYIPEGMQCSCGIDYYTLKPEVNNES). Glutamate 201 is a binding site for Zn(2+). A helical membrane pass occupies residues 203–224 (FVIYMFVVHFTIPMVVIFFCYG). Topologically, residues 225–252 (QLVFTVKEAAAQQQESATTQKAEKEVTR) are cytoplasmic. Residues 253–274 (MVIIMVIAFLICWLPYAGVAFY) traverse the membrane as a helical segment. The Extracellular segment spans residues 275 to 286 (IFTHQGSNFGPI). Glutamine 279 is a binding site for Zn(2+). A helical membrane pass occupies residues 287–308 (LMTLPAFFAKTSAVYNPVIYIM). Residue lysine 296 is modified to N6-(retinylidene)lysine. Residues 309 to 348 (LNKQFRTCMLTTLCCGKIPLGDDEASATASKTETSQVAPA) lie on the Cytoplasmic side of the membrane. S-palmitoyl cysteine attachment occurs at residues cysteine 322 and cysteine 323. The segment at 330–348 (DDEASATASKTETSQVAPA) is interaction with SAG. At serine 334 the chain carries Phosphoserine. A Phosphothreonine modification is found at threonine 336. Residue serine 338 is modified to Phosphoserine. Residues threonine 340 and threonine 342 each carry the phosphothreonine modification. A Phosphoserine modification is found at serine 343.

Belongs to the G-protein coupled receptor 1 family. Opsin subfamily. Homodimer. May form a complex composed of RHO, GRK1 and RCVRN in a Ca(2+)-dependent manner; RCVRN prevents the interaction between GRK1 and RHO. Interacts with GRK1. Interacts (phosphorylated form) with SAG. Interacts with GNAT1. Interacts with GNAT3. SAG and G-proteins compete for a common binding site. Interacts with PRCD; the interaction promotes PRCD stability. Forms a complex with ASAP1 and ARF4. Forms a complex with ASAP1, RAB11A, Rabin8/RAB3IP, ARF4 and RAB11FIP3; the complex regulates Golgi-to-cilia rhodopsin/RHO transport in photoreceptors. Post-translationally, phosphorylated on some or all of the serine and threonine residues present in the C-terminal region. In terms of processing, contains one covalently linked retinal chromophore. Upon light absorption, the covalently bound 11-cis-retinal is converted to all-trans-retinal. After hydrolysis of the Schiff base and release of the covalently bound all-trans-retinal, active rhodopsin is regenerated by binding of a fresh molecule of 11-cis-retinal.

The protein resides in the membrane. Its subcellular location is the cell projection. The protein localises to the cilium. It is found in the photoreceptor outer segment. Functionally, photoreceptor required for image-forming vision at low light intensity. Required for photoreceptor cell viability after birth. Light-induced isomerization of 11-cis to all-trans retinal triggers a conformational change that activates signaling via G-proteins. Subsequent receptor phosphorylation mediates displacement of the bound G-protein alpha subunit by the arrestin SAG and terminates signaling. The polypeptide is Rhodopsin (RHO) (Caluromys philander (Bare-tailed woolly opossum)).